Consider the following 193-residue polypeptide: Immunogenic protein MPB70 (193 aa).

The first 30 residues, 1–30 (MKVKNTIAATSFAAAGLAALAVAVSPPAAA), serve as a signal peptide directing secretion. The region spanning 57-189 (QDPVAVAASN…ATVYMIDSVL (133 aa)) is the FAS1 domain.

As to quaternary structure, generally found as a monomer; homodimer in culture fluids.

The protein localises to the secreted. This chain is Immunogenic protein MPB70 (mpb70), found in Mycobacterium bovis (strain ATCC BAA-935 / AF2122/97).